The following is a 442-amino-acid chain: C4-dicarboxylate transport protein (442 aa).

A run of 8 helical transmembrane segments spans residues 10-30 (VQVL…PSFG), 40-60 (FIKL…VSGI), 77-97 (LIYF…VANI), 149-169 (LLQV…LGTL), 185-205 (FVIL…AMAF), 221-241 (LMVA…GLIA), 288-308 (VVGL…SIYL), and 354-374 (AATL…ILGI). A disordered region spans residues 420-442 (PATPEVAAEERGEGRGLDGPLPA).

It belongs to the dicarboxylate/amino acid:cation symporter (DAACS) (TC 2.A.23) family.

It localises to the cell membrane. Functionally, responsible for the transport of dicarboxylates such as succinate, fumarate, and malate across the membrane. The protein is C4-dicarboxylate transport protein of Deinococcus geothermalis (strain DSM 11300 / CIP 105573 / AG-3a).